Consider the following 307-residue polypeptide: Taste receptor type 2 member 10 (307 aa).

At 1 to 6 the chain is on the extracellular side; sequence MLSVVE. Residues 7–27 form a helical membrane-spanning segment; sequence GILILVVISESVFGVLGNGFI. Residues 28 to 42 lie on the Cytoplasmic side of the membrane; that stretch reads GLVNCIDCAKNKLST. A helical transmembrane segment spans residues 43–63; that stretch reads IGFILTGLAISRIFLIWIIIT. At 64–100 the chain is on the extracellular side; the sequence is DGFIQIFSPDVYASGNLIEYISYFWVITNQSSIWFAT. N92 is a glycosylation site (N-linked (GlcNAc...) asparagine). Residues 101–121 traverse the membrane as a helical segment; sequence SLSIFYFLKIANFSNYIFLWL. Over 122–126 the chain is Cytoplasmic; sequence KSRIN. A helical transmembrane segment spans residues 127 to 147; the sequence is RVLPLLMGFLLISCLLNFAYI. Residues 148–179 are Extracellular-facing; sequence VKILNDLKMKNDTVWRLNMYKSEYFIKQLLLN. N-linked (GlcNAc...) asparagine glycosylation is present at N158. A helical transmembrane segment spans residues 180–200; the sequence is LGVIFFFTLSLITSVLLIISL. Topologically, residues 201-227 are cytoplasmic; sequence WRHNRQMQSNVTGLRDSITEAHVKAMK. Residues 228 to 248 form a helical membrane-spanning segment; it reads VLISFIILFILYFIGIAIEIS. The Extracellular segment spans residues 249 to 257; sequence YFTVPENKL. The helical transmembrane segment at 258–278 threads the bilayer; it reads LLIFGMTTTAIYPWGHSFILI. Residues 279–307 are Cytoplasmic-facing; it reads LGNSKLKQASLRVLQQLKCCEERKNLRAT.

This sequence belongs to the G-protein coupled receptor T2R family.

Its subcellular location is the membrane. Its function is as follows. Receptor that may play a role in the perception of bitterness and is gustducin-linked. May play a role in sensing the chemical composition of the gastrointestinal content. The activity of this receptor may stimulate alpha gustducin, mediate PLC-beta-2 activation and lead to the gating of TRPM5. This Papio hamadryas (Hamadryas baboon) protein is Taste receptor type 2 member 10 (TAS2R10).